We begin with the raw amino-acid sequence, 357 residues long: uncharacterized protein (357 aa).

Residues 173-211 (VLPILEKLMQDESLYVRKSVANNLNDISKTHPHLLRKVA) form an HEAT repeat.

This is an uncharacterized protein from Bacillus subtilis (strain 168).